A 617-amino-acid chain; its full sequence is Neurosecretory protein VGF (617 aa).

The signal sequence occupies residues 1-23 (MKTFTLPASVLFCFLLLIQGLGA). Disordered stretches follow at residues 29–75 (PDVF…GELF), 93–204 (RPAS…ESPG), and 239–262 (SESA…THLG). The span at 48–64 (AVSRPKDDGVPEVRAAR) shows a compositional bias: basic and acidic residues. Residues 149–160 (DPEEDDRSEELE) show a composition bias toward acidic residues. Residues 182–197 (ETAAAETETRTHTLTR) show a composition bias toward low complexity. Position 313 is a pyrrolidone carboxylic acid (Gln313). Basic and acidic residues predominate over residues 345-364 (RQRDLGGRELQETQQERENE). Residues 345 to 599 (RQRDLGGREL…EEADAEERRL (255 aa)) form a disordered region. The segment covering 378–397 (EDDVGEEDEEAAEAEAEAEE) has biased composition (acidic residues). Residues 418–436 (AEDKRSQEEAPGHRRKDAE) show a composition bias toward basic and acidic residues. Ser423 is modified (phosphoserine). The span at 437 to 452 (GAEEGGEEDDDDEEMD) shows a compositional bias: acidic residues. Pro residues predominate over residues 491-501 (PPEPVPPPRAA). Positions 577 to 599 (HHPDLEAQARRAQEEADAEERRL) are enriched in basic and acidic residues.

As to quaternary structure, interacts with HSPA8 on cell membrane. Interacts with C3AR1. Interacts with C1QBP.

The protein localises to the secreted. Its subcellular location is the cytoplasmic vesicle. It is found in the secretory vesicle. Secreted polyprotein that is packaged and proteolytically processed by prohormone convertases PCSK1 and PCSK2 in a cell-type-specific manner. VGF and peptides derived from its processing play many roles in neurogenesis and neuroplasticity associated with learning, memory, depression and chronic pain. Its function is as follows. Plays a role in the control of body fluid homeostasis by regulating vasopressin release. Suppresses presynaptic glutamatergic neurons connected to vasopressin neurons. Functionally, plays a role in the control of body fluid homeostasis by regulating vasopressin release. Activates GABAergic interneurons which are inhibitory neurons of the nervous system and thereby suppresses presynaptic glutamatergic neurons. Also stimulates feeding behavior in an orexin-dependent manner in the hypothalamus. Functions as a positive regulator for the activation of orexin neurons resulting in elevated gastric acid secretion and gastric emptying. In terms of biological role, secreted multifunctional peptide that interacts with different receptors and thereby plays multiple physiological roles including modulation of energy expenditure, pain, response to stress, gastric regulation as well as lipolysis. Activates the G-protein-coupled receptor C3AR1 via a folding-upon-binding mechanism leading to enhanced lipolysis in adipocytes. Interacts with gC1qR receptor in macrophages and microglia causing increased levels of intracellular calcium and hypersensitivity. Plays a role in the regulation of memory formation and depression-related behaviors potentially by influencing synaptic plasticity and neurogenesis. Induces acute and transient activation of the NTRK2/TRKB receptor and subsequent CREB phosphorylation. Also induces insulin secretion in insulinoma cells by increasing intracellular calcium mobilization. This chain is Neurosecretory protein VGF, found in Mus musculus (Mouse).